The sequence spans 437 residues: Nuclear hormone receptor family member nhr-100 (437 aa).

Residues 21-96 (DTSCLVCGDP…VGMDANAVRS (76 aa)) constitute a DNA-binding region (nuclear receptor). NR C4-type zinc fingers lie at residues 24-44 (CLVC…CNGC) and 60-79 (CSFN…CRAC). The 269-residue stretch at 141 to 409 (QTKEIIAHML…SGGGLPYDIH (269 aa)) folds into the NR LBD domain.

This sequence belongs to the nuclear hormone receptor family.

The protein localises to the nucleus. Its function is as follows. Orphan nuclear receptor. The polypeptide is Nuclear hormone receptor family member nhr-100 (nhr-100) (Caenorhabditis elegans).